The chain runs to 200 residues: Ankyrin repeat-containing protein YAR1 (200 aa).

ANK repeat units follow at residues 49 to 78 and 92 to 121; these read SDST…RANS and TGNT…ADPF. Ser78 is subject to Phosphoserine. The segment at 152–173 is disordered; it reads VEPEDDEEDTQTEGKNSVQITK. A compositionally biased stretch (acidic residues) spans 153 to 162; that stretch reads EPEDDEEDTQ. Residues 164–173 are compositionally biased toward polar residues; the sequence is EGKNSVQITK.

Required for normal rate of cell proliferation. The protein is Ankyrin repeat-containing protein YAR1 (YAR1) of Saccharomyces cerevisiae (strain ATCC 204508 / S288c) (Baker's yeast).